A 221-amino-acid chain; its full sequence is Ribonuclease T (221 aa).

Residues 20–194 form the Exonuclease domain; it reads VVIDVETAGF…YDTERTAELF (175 aa). Mg(2+) is bound by residues Asp-23, Glu-25, His-181, and Asp-186. His-181 (proton donor/acceptor) is an active-site residue.

It belongs to the RNase T family. Homodimer. The cofactor is Mg(2+).

Functionally, trims short 3' overhangs of a variety of RNA species, leaving a one or two nucleotide 3' overhang. Responsible for the end-turnover of tRNA: specifically removes the terminal AMP residue from uncharged tRNA (tRNA-C-C-A). Also appears to be involved in tRNA biosynthesis. In Shewanella frigidimarina (strain NCIMB 400), this protein is Ribonuclease T.